A 344-amino-acid polypeptide reads, in one-letter code: Protein L-Myc-1-B (344 aa).

Polar residues-rich tracts occupy residues 104 to 113 (GSPRVTNTQK) and 213 to 223 (NTMSPQHNFHS). Disordered stretches follow at residues 104–162 (GSPR…EDEI) and 208–271 (LPPE…YLER). Over residues 259–270 (DLAKRKNHNYLE) the composition is skewed to basic and acidic residues. In terms of domain architecture, bHLH spans 261–313 (AKRKNHNYLERKRRNDLRSRFLALREEVPSLSRSTKTPKVVVLSKATEFLKGL). Residues 313-341 (LVIQEQQLTAEKLKLWSRHQQLLRRISQL) form a leucine-zipper region.

Efficient DNA binding requires dimerization with another bHLH protein. Binds DNA as a heterodimer with MAX. In terms of tissue distribution, high levels in oocytes, modest levels in kidney and low levels in spleen.

It localises to the nucleus. The polypeptide is Protein L-Myc-1-B (mycl1-b) (Xenopus laevis (African clawed frog)).